A 122-amino-acid chain; its full sequence is Large ribosomal subunit protein uL14 (122 aa).

It belongs to the universal ribosomal protein uL14 family. In terms of assembly, part of the 50S ribosomal subunit. Forms a cluster with proteins L3 and L19. In the 70S ribosome, L14 and L19 interact and together make contacts with the 16S rRNA in bridges B5 and B8.

Binds to 23S rRNA. Forms part of two intersubunit bridges in the 70S ribosome. The polypeptide is Large ribosomal subunit protein uL14 (Thermus aquaticus).